The chain runs to 160 residues: Respiratory supercomplex factor 1, mitochondrial (160 aa).

Residues 5 to 96 (PSSFDSKEAS…SSLKEKKSEE (92 aa)) enclose the HIG1 domain. Transmembrane regions (helical) follow at residues 33-49 (LVPL…ALAA) and 67-89 (RVGL…GSSL). Residues 88-160 (SLKEKKSEEE…DLESHIKNEK (73 aa)) adopt a coiled-coil conformation.

Belongs to the RCF1 family. As to quaternary structure, associates with the respiratory chain complex III/complex IV supercomplex.

It localises to the mitochondrion membrane. Its function is as follows. Cytochrome c oxidase subunit which plays a role in assembly of respiratory supercomplexes. The sequence is that of Respiratory supercomplex factor 1, mitochondrial (RCF1) from Zygosaccharomyces rouxii (strain ATCC 2623 / CBS 732 / NBRC 1130 / NCYC 568 / NRRL Y-229).